A 476-amino-acid polypeptide reads, in one-letter code: tRNA(Ile)-lysidine synthase (476 aa).

Residue 30 to 35 (SGGPDS) participates in ATP binding.

This sequence belongs to the tRNA(Ile)-lysidine synthase family.

It is found in the cytoplasm. It carries out the reaction cytidine(34) in tRNA(Ile2) + L-lysine + ATP = lysidine(34) in tRNA(Ile2) + AMP + diphosphate + H(+). Functionally, ligates lysine onto the cytidine present at position 34 of the AUA codon-specific tRNA(Ile) that contains the anticodon CAU, in an ATP-dependent manner. Cytidine is converted to lysidine, thus changing the amino acid specificity of the tRNA from methionine to isoleucine. The protein is tRNA(Ile)-lysidine synthase of Bacillus cereus (strain ATCC 14579 / DSM 31 / CCUG 7414 / JCM 2152 / NBRC 15305 / NCIMB 9373 / NCTC 2599 / NRRL B-3711).